A 547-amino-acid chain; its full sequence is Pyochelin synthase PchD (547 aa).

Belongs to the ATP-dependent AMP-binding enzyme family.

It carries out the reaction salicylate + holo-[ACP] + ATP = salicyl-[ACP] + AMP + diphosphate. It functions in the pathway siderophore biosynthesis. The protein operates within antifungal biosynthesis. Functionally, involved in the biosynthesis of the siderophore pyochelin. Specifically adenylates salicylate and loads it onto the holo form of PchE via a thioester linkage to the phosphopanthetheine moiety. Is also involved in the synthesis of the antifungal antibiotic dihydroaeruginoic acid (Dha or hydroxyphenyl-thiazolinyl-carboxylate), a precursor of pyochelin. The polypeptide is Pyochelin synthase PchD (Pseudomonas aeruginosa (strain ATCC 15692 / DSM 22644 / CIP 104116 / JCM 14847 / LMG 12228 / 1C / PRS 101 / PAO1)).